A 115-amino-acid chain; its full sequence is Ig kappa chain V region 3315 (115 aa).

A framework-1 region spans residues 1-24 (AQIVMTQTPSSVSAAVGGTVTINC). The complementarity-determining-1 stretch occupies residues 25–37 (QSSQSVYENGRLS). Residues 38–52 (WFQQKPGQPPKRLIY) are framework-2. The tract at residues 53-59 (RASTLAS) is complementarity-determining-2. The segment at 60–91 (GVSSRFTGSGSGTQFTLSISDVQCDDAATYYC) is framework-3. The complementarity-determining-3 stretch occupies residues 92-104 (LGNYDCSSGDSFT). The framework-4 stretch occupies residues 105 to 114 (FGGGTEVVVK).

In Oryctolagus cuniculus (Rabbit), this protein is Ig kappa chain V region 3315.